A 715-amino-acid chain; its full sequence is 1,4-alpha-glucan branching enzyme GlgB (715 aa).

Asp396 serves as the catalytic Nucleophile. Glu449 (proton donor) is an active-site residue.

It belongs to the glycosyl hydrolase 13 family. GlgB subfamily. In terms of assembly, monomer.

The catalysed reaction is Transfers a segment of a (1-&gt;4)-alpha-D-glucan chain to a primary hydroxy group in a similar glucan chain.. It participates in glycan biosynthesis; glycogen biosynthesis. In terms of biological role, catalyzes the formation of the alpha-1,6-glucosidic linkages in glycogen by scission of a 1,4-alpha-linked oligosaccharide from growing alpha-1,4-glucan chains and the subsequent attachment of the oligosaccharide to the alpha-1,6 position. The protein is 1,4-alpha-glucan branching enzyme GlgB of Vibrio vulnificus (strain CMCP6).